Here is a 179-residue protein sequence, read N- to C-terminus: Adenine phosphoribosyltransferase (179 aa).

It belongs to the purine/pyrimidine phosphoribosyltransferase family. In terms of assembly, homodimer.

It is found in the cytoplasm. The enzyme catalyses AMP + diphosphate = 5-phospho-alpha-D-ribose 1-diphosphate + adenine. It functions in the pathway purine metabolism; AMP biosynthesis via salvage pathway; AMP from adenine: step 1/1. Its function is as follows. Catalyzes a salvage reaction resulting in the formation of AMP, that is energically less costly than de novo synthesis. The polypeptide is Adenine phosphoribosyltransferase (Jannaschia sp. (strain CCS1)).